The primary structure comprises 317 residues: Fe-S cluster assembly protein DRE2 (317 aa).

The segment at 1-131 is N-terminal SAM-like domain; sequence MERMLFLSPP…KPNFGAQDTV (131 aa). Residues 132-209 form a linker region; that stretch reads PLKLGKKKKA…EEALMDEEDM (78 aa). Cys219, Cys230, Cys233, and Cys235 together coordinate [2Fe-2S] cluster. The interval 219 to 235 is fe-S binding site A; the sequence is CRPKAGKRRRACKDCTC. Residues Cys280, Cys283, Cys291, and Cys294 each contribute to the [4Fe-4S] cluster site. 2 short sequence motifs (cx2C motif) span residues 280-283 and 291-294; these read CGNC and CDGC. The tract at residues 280-294 is fe-S binding site B; the sequence is CGNCALGDAFRCDGC.

It belongs to the anamorsin family. As to quaternary structure, monomer. Interacts with TAH18. Interacts with MIA40. The cofactor is [2Fe-2S] cluster. It depends on [4Fe-4S] cluster as a cofactor.

It localises to the cytoplasm. Its subcellular location is the mitochondrion intermembrane space. Its function is as follows. Component of the cytosolic iron-sulfur (Fe-S) protein assembly (CIA) machinery required for the maturation of extramitochondrial Fe-S proteins. Part of an electron transfer chain functioning in an early step of cytosolic Fe-S biogenesis, facilitating the de novo assembly of a [4Fe-4S] cluster on the scaffold complex CFD1-NBP35. Electrons are transferred to DRE2 from NADPH via the FAD- and FMN-containing protein TAH18. TAH18-DRE2 are also required for the assembly of the diferric tyrosyl radical cofactor of ribonucleotide reductase (RNR), probably by providing electrons for reduction during radical cofactor maturation in the catalytic small subunit RNR2. The sequence is that of Fe-S cluster assembly protein DRE2 from Uncinocarpus reesii (strain UAMH 1704).